Consider the following 243-residue polypeptide: 1-(5-phosphoribosyl)-5-[(5-phosphoribosylamino)methylideneamino] imidazole-4-carboxamide isomerase (243 aa).

Aspartate 8 serves as the catalytic Proton acceptor. Catalysis depends on aspartate 130, which acts as the Proton donor.

It belongs to the HisA/HisF family.

It localises to the cytoplasm. The enzyme catalyses 1-(5-phospho-beta-D-ribosyl)-5-[(5-phospho-beta-D-ribosylamino)methylideneamino]imidazole-4-carboxamide = 5-[(5-phospho-1-deoxy-D-ribulos-1-ylimino)methylamino]-1-(5-phospho-beta-D-ribosyl)imidazole-4-carboxamide. The protein operates within amino-acid biosynthesis; L-histidine biosynthesis; L-histidine from 5-phospho-alpha-D-ribose 1-diphosphate: step 4/9. The sequence is that of 1-(5-phosphoribosyl)-5-[(5-phosphoribosylamino)methylideneamino] imidazole-4-carboxamide isomerase from Cellvibrio japonicus (strain Ueda107) (Pseudomonas fluorescens subsp. cellulosa).